The following is a 783-amino-acid chain: RNA exonuclease 5 (783 aa).

Residues 230–378 (LFGLDCEMCL…EDARTTLELA (149 aa)) form the Exonuclease domain. RRM domains follow at residues 503 to 577 (STVY…RPVT) and 598 to 677 (GTIY…RHLH).

This Bos taurus (Bovine) protein is RNA exonuclease 5 (REXO5).